Consider the following 30-residue polypeptide: GIPCAESCVYIPCTITALLGCSCKNKVCYN.

Residues 1–30 (GIPCAESCVYIPCTITALLGCSCKNKVCYN) constitute a cross-link (cyclopeptide (Gly-Asn)). Intrachain disulfides connect Cys-4–Cys-21, Cys-8–Cys-23, and Cys-13–Cys-28.

This is a cyclic peptide.

Probably participates in a plant defense mechanism. The sequence is that of Cyclotide hypa-A from Pombalia parviflora (Violetilla).